The sequence spans 221 residues: Small ribosomal subunit protein uS5 (221 aa).

The disordered stretch occupies residues 1–40 (MMAQRNSGAPDNAGGSNDGREGGRGRRDNRDDRRGGRDNA). The segment covering 18 to 40 (DGREGGRGRRDNRDDRRGGRDNA) has biased composition (basic and acidic residues). The S5 DRBM domain occupies 45-108 (YLERVVTINR…DEARKNFFRV (64 aa)).

It belongs to the universal ribosomal protein uS5 family. Part of the 30S ribosomal subunit. Contacts proteins S4 and S8.

Its function is as follows. With S4 and S12 plays an important role in translational accuracy. Functionally, located at the back of the 30S subunit body where it stabilizes the conformation of the head with respect to the body. This is Small ribosomal subunit protein uS5 from Mycobacteroides abscessus (strain ATCC 19977 / DSM 44196 / CCUG 20993 / CIP 104536 / JCM 13569 / NCTC 13031 / TMC 1543 / L948) (Mycobacterium abscessus).